A 504-amino-acid polypeptide reads, in one-letter code: UDP-N-acetylglucosamine--peptide N-acetylglucosaminyltransferase GtfA subunit (504 aa).

16-19 (GVEY) serves as a coordination point for UDP. His-243 provides a ligand contact to N-acetyl-D-glucosamine. 385–386 (HK) contributes to the UDP binding site. Residue 405–408 (EGFG) coordinates N-acetyl-D-glucosamine.

Belongs to the glycosyltransferase group 1 family. Glycosyltransferase 4 subfamily. Interacts with stabilizing protein GtfB (Gtf1), probably via the N-terminus of this protein; probably forms a heterotetramer with 2 subunits each of GtfA and GtfB. Part of the accessory SecA2/SecY2 protein translocation apparatus.

Its subcellular location is the cytoplasm. The protein resides in the cell membrane. It catalyses the reaction L-seryl-[protein] + UDP-N-acetyl-alpha-D-glucosamine = 3-O-[N-acetyl-alpha-D-glucosaminyl]-L-seryl-[protein] + UDP + H(+). It participates in protein modification; protein glycosylation. Its function is as follows. Required for polymorphic O-glycosylation of serine-rich repeat protein Fap1. Catalyzes the first step in glycosylation by transferring N-acetylglucosamine from UDP-GlcNAc to serine residues in Fap1. Part of the accessory SecA2/SecY2 system specifically required to export Fap1, a serine-rich fimbrial adhesin encoded upstream in the same operon. The GtfA-GtfB (Gtf1-Gtf2 in this bacteria) complex adds GlcNAc from UDP-GlcNAc to Fap1, attaching the first sugar residue. Cannot use not UDP-Glc as substrate. This subunit has very low glycosyltransferase activity; the GtfB stabilizing protein enhances membrane association, protease resistance and glycosyltransferase activity. The sequence is that of UDP-N-acetylglucosamine--peptide N-acetylglucosaminyltransferase GtfA subunit from Streptococcus parasanguinis.